A 274-amino-acid polypeptide reads, in one-letter code: Shikimate dehydrogenase (NADP(+)) (274 aa).

Shikimate is bound by residues 14–16 and threonine 61; that span reads SLS. Lysine 65 (proton acceptor) is an active-site residue. Asparagine 85 and aspartate 106 together coordinate shikimate. NADP(+)-binding positions include 130-134, 153-158, and alanine 217; these read GAGGA and NRTAER. Tyrosine 219 is a binding site for shikimate. Glycine 240 is an NADP(+) binding site.

This sequence belongs to the shikimate dehydrogenase family. Homodimer.

It catalyses the reaction shikimate + NADP(+) = 3-dehydroshikimate + NADPH + H(+). It functions in the pathway metabolic intermediate biosynthesis; chorismate biosynthesis; chorismate from D-erythrose 4-phosphate and phosphoenolpyruvate: step 4/7. Its function is as follows. Involved in the biosynthesis of the chorismate, which leads to the biosynthesis of aromatic amino acids. Catalyzes the reversible NADPH linked reduction of 3-dehydroshikimate (DHSA) to yield shikimate (SA). This chain is Shikimate dehydrogenase (NADP(+)), found in Halorubrum lacusprofundi (strain ATCC 49239 / DSM 5036 / JCM 8891 / ACAM 34).